Reading from the N-terminus, the 84-residue chain is Large ribosomal subunit protein bL27 (84 aa).

Positions 1–21 are disordered; it reads MAHKKGGGSTKNGRDSNPKYL.

Belongs to the bacterial ribosomal protein bL27 family.

The chain is Large ribosomal subunit protein bL27 from Chlorobium luteolum (strain DSM 273 / BCRC 81028 / 2530) (Pelodictyon luteolum).